A 1099-amino-acid polypeptide reads, in one-letter code: Probable inorganic carbon transporter subunit DabA (1099 aa).

Positions 175–194 are disordered; the sequence is RQGRRRFATTERRTRRTRRS. Over residues 176 to 194 the composition is skewed to basic residues; it reads QGRRRFATTERRTRRTRRS. Zn(2+) is bound by residues cysteine 514, aspartate 516, histidine 722, and cysteine 737. The segment at 1071–1099 is disordered; the sequence is AGAGAAQPTRDAIELPEQASGPLPARDGQ.

This sequence belongs to the inorganic carbon transporter (TC 9.A.2) DabA family. As to quaternary structure, forms a complex with DabB. Zn(2+) is required as a cofactor.

The protein localises to the cell membrane. Part of an energy-coupled inorganic carbon pump. This is Probable inorganic carbon transporter subunit DabA from Parafrankia sp. (strain EAN1pec).